The following is a 579-amino-acid chain: Nif-specific regulatory protein (579 aa).

Residues 40 to 187 (DPVAEVPQIF…MVASLLEQAL (148 aa)) enclose the GAF domain. One can recognise a Sigma-54 factor interaction domain in the interval 226–454 (IVGSSPAIAE…LENCVNRAAA (229 aa)). Residues 254 to 261 (GESGTGKE) and 317 to 326 (ADGGTLFLDE) contribute to the ATP site. Positions 464–536 (EELACRQGAC…PLRTKTAQLS (73 aa)) are inter-domain linker. Residues C468 and C473 each coordinate a divalent metal cation. Positions 502–529 (RVSAPPPEPAPAPEPAPEAPPREEVPLR) are disordered. Tandem repeats lie at residues 505 to 506 (AP), 507 to 508 (PP), 509 to 510 (EP), 511 to 512 (AP), 513 to 514 (AP), 515 to 516 (EP), and 517 to 518 (AP). A 7 X 2 AA tandem repeats of X-P region spans residues 505-518 (APPPEPAPAPEPAP). Pro residues predominate over residues 505-520 (APPPEPAPAPEPAPEA). The interval 537–579 (REELLRALESAGWVQAKAARLLGMTPRQIAYALQKFEIELRKI) is C-terminal DNA-binding domain. A DNA-binding region (H-T-H motif) is located at residues 551-570 (QAKAARLLGMTPRQIAYALQ).

As to quaternary structure, interacts with sigma-54.

Its function is as follows. Required for activation of most nif operons, which are directly involved in nitrogen fixation. This Rhodobacter capsulatus (strain ATCC BAA-309 / NBRC 16581 / SB1003) protein is Nif-specific regulatory protein (nifA1).